The primary structure comprises 25 residues: GLLSVLGSVAKHVLPHVVPVIAEHL.

Leu25 carries the post-translational modification Leucine amide.

In terms of tissue distribution, expressed by the skin dorsal glands.

The protein localises to the secreted. In terms of biological role, antibacterial peptide with wide spectrum of activity. Active against the Gram-positive bacteria B.cereus (MIC=50 ug/ml), E.faecalis (MIC=25 ug/ml), L.lactis (MIC=1.5 ug/ml), L.innocua (MIC=25 ug/ml), S.aureus (MIC=3 ug/ml), S.epidermidis (MIC=12 ug/ml) and S.uberis (MIC=12 ug/ml), and against the Gram-negative bacteria E.coli (MIC=100 ug/ml) and P.multocida (MIC=25 ug/ml). This chain is Caerin 1.1, found in Litoria peronii (Emerald spotted tree frog).